The primary structure comprises 63 residues: MRFFSLFTFLVAFIAAALAAPVEIGEDLFALRPTGAKRDIILMMPVCFEGEKLNKDQTKCIKA.

The signal sequence occupies residues M1–A19. The propeptide occupies A20 to L42. C47 and C60 are oxidised to a cystine.

Expressed by the venom gland.

It is found in the secreted. The protein is U-reduvitoxin-Pr9a of Platymeris rhadamanthus (Red spot assassin bug).